The chain runs to 277 residues: Probable endonuclease 4 (277 aa).

The Zn(2+) site is built by His-70, His-108, Glu-143, Asp-176, His-179, His-210, Asp-223, His-225, and Glu-255.

The protein belongs to the AP endonuclease 2 family. The cofactor is Zn(2+).

The catalysed reaction is Endonucleolytic cleavage to 5'-phosphooligonucleotide end-products.. Endonuclease IV plays a role in DNA repair. It cleaves phosphodiester bonds at apurinic or apyrimidinic (AP) sites, generating a 3'-hydroxyl group and a 5'-terminal sugar phosphate. The chain is Probable endonuclease 4 from Mycoplasmopsis synoviae (strain 53) (Mycoplasma synoviae).